A 316-amino-acid chain; its full sequence is Acetyl-coenzyme A carboxylase carboxyl transferase subunit alpha (316 aa).

The CoA carboxyltransferase C-terminal domain occupies 39 to 293 (KLEEKNAQLT…KKHLQANLTN (255 aa)).

This sequence belongs to the AccA family. In terms of assembly, acetyl-CoA carboxylase is a heterohexamer composed of biotin carboxyl carrier protein (AccB), biotin carboxylase (AccC) and two subunits each of ACCase subunit alpha (AccA) and ACCase subunit beta (AccD).

It is found in the cytoplasm. The catalysed reaction is N(6)-carboxybiotinyl-L-lysyl-[protein] + acetyl-CoA = N(6)-biotinyl-L-lysyl-[protein] + malonyl-CoA. It functions in the pathway lipid metabolism; malonyl-CoA biosynthesis; malonyl-CoA from acetyl-CoA: step 1/1. Functionally, component of the acetyl coenzyme A carboxylase (ACC) complex. First, biotin carboxylase catalyzes the carboxylation of biotin on its carrier protein (BCCP) and then the CO(2) group is transferred by the carboxyltransferase to acetyl-CoA to form malonyl-CoA. The protein is Acetyl-coenzyme A carboxylase carboxyl transferase subunit alpha of Coxiella burnetii (strain CbuK_Q154) (Coxiella burnetii (strain Q154)).